The chain runs to 322 residues: Probable cardiolipin synthase (CMP-forming) (322 aa).

The next 3 helical transmembrane spans lie at 143–163 (IGYV…AFAG), 199–219 (LVIS…IVVF), and 289–309 (LQGL…SYVM).

Belongs to the CDP-alcohol phosphatidyltransferase class-I family.

It localises to the mitochondrion inner membrane. It carries out the reaction a CDP-1,2-diacyl-sn-glycerol + a 1,2-diacyl-sn-glycero-3-phospho-(1'-sn-glycerol) = a cardiolipin + CMP + H(+). In terms of biological role, catalyzes the synthesis of cardiolipin (CL) (diphosphatidylglycerol) by specifically transferring a phosphatidyl group from CDP-diacylglycerol to phosphatidylglycerol (PG). CL is a key phospholipid in mitochondrial membranes and plays important roles in maintaining the functional integrity and dynamics of mitochondria under both optimal and stress conditions. The chain is Probable cardiolipin synthase (CMP-forming) (CLS) from Drosophila melanogaster (Fruit fly).